A 472-amino-acid polypeptide reads, in one-letter code: GTPase HflX (472 aa).

The interval 1–21 (MDTIDTPGEQGSQSFGNSLGA) is disordered. The Hflx-type G domain occupies 230-396 (PTFALIGYTN…LMTEIIQEKS (167 aa)). Residues 236-243 (GYTNSGKS), 261-265 (FATLD), 283-286 (DTVG), 349-352 (NKVD), and 374-376 (SAK) contribute to the GTP site. Mg(2+) contacts are provided by Ser243 and Thr263.

This sequence belongs to the TRAFAC class OBG-HflX-like GTPase superfamily. HflX GTPase family. Monomer. Associates with the 50S ribosomal subunit. Mg(2+) is required as a cofactor.

The protein localises to the cytoplasm. Functionally, GTPase that associates with the 50S ribosomal subunit and may have a role during protein synthesis or ribosome biogenesis. Specific for GTP. This is GTPase HflX from Chlamydia pneumoniae (Chlamydophila pneumoniae).